Reading from the N-terminus, the 2159-residue chain is Calpain-type cysteine protease DEK1 (2159 aa).

An N-terminal signal peptide occupies residues 1-33 (MEGEGHHGVVLACSICGFLFAVLSPFSFWVLWA). The Extracellular segment spans residues 34 to 70 (VNWRPWRLYSWIYARKWPTYVQGPQLSTLCSLLTLCA). Residues 71 to 91 (WLVVISPIAVLLVWGSVLIAL) form a helical membrane-spanning segment. The Cytoplasmic segment spans residues 92–95 (MERN). The helical transmembrane segment at 96–116 (IIGLAVIMAGVALLLSFYSIM) threads the bilayer. Residues 117 to 127 (LWWRTQWQSSE) are Extracellular-facing. Residues 128 to 148 (AVAYLLLLAVCLLCAYDFCAI) form a helical membrane-spanning segment. Over 149-164 (YVTAGASASELNSPSG) the chain is Cytoplasmic. Residues 165 to 185 (FFFGVSVISLAINMLFICKIL) form a helical membrane-spanning segment. Topologically, residues 186-236 (FNVSGFDVDEYVRRSYKFAYSDCVEVAPVSCSPEPPDPSELYMTKSSRVKH) are extracellular. A helical membrane pass occupies residues 237-257 (LGLLYISSLLVLVGYSILYGL). Over 258–264 (TSKEARW) the chain is Cytoplasmic. A helical membrane pass occupies residues 265–285 (LGALTSVAVVILDWNLGLCSF). The Extracellular portion of the chain corresponds to 286–294 (RFELLKSRM). The helical transmembrane segment at 295–315 (IVLFVAGTSRAFLVSFGVHYW) threads the bilayer. Over 316-320 (YLGHC) the chain is Cytoplasmic. The helical transmembrane segment at 321-341 (ISYAFVASVLLSAAVSSWLSI) threads the bilayer. At 342-623 (SNPSVARIDA…LIFHHLAGSP (282 aa)) the chain is on the extracellular side. Positions 365–409 (RKGQNSSSNSSEGCGSSVKRSSGSVEAGQNGNAMDSMYRSNSQSD) are disordered. Low complexity predominate over residues 369–381 (NSSSNSSEGCGSS). Positions 382–409 (VKRSSGSVEAGQNGNAMDSMYRSNSQSD) are enriched in polar residues. A helical transmembrane segment spans residues 624 to 644 (IRAFIVFTVMFIIETATVAIY). Topologically, residues 645-660 (RPETIKVINATHEQFE) are cytoplasmic. Residues 661–681 (FGFSILLLSPVVCSIMAFIWS) form a helical membrane-spanning segment. Residues 682 to 694 (LRAEEMLMTSKPQ) are Extracellular-facing. Residues 695 to 715 (KYGFIAWLLSTCVGLFLSFLS) form a helical membrane-spanning segment. The Cytoplasmic segment spans residues 716 to 719 (KSSV). The chain crosses the membrane as a helical span at residues 720–740 (ILGLSLTVPLMVACLSFAVPI). Over 741–770 (WIRNGYSFWIPGREFANRENVSQAPGEKER) the chain is Extracellular. The helical transmembrane segment at 771–791 (ALFVITIAVFTASIIGLGAIV) threads the bilayer. Topologically, residues 792-822 (SAKPLDALGYKGWDADKNSSYSPYATSMYLG) are cytoplasmic. Residues 823 to 843 (WALSSTIAVITTGLIPIVAWF) traverse the membrane as a helical segment. Residues 844 to 853 (ATYRFSPSSA) are Extracellular-facing. The helical transmembrane segment at 854–874 (ICVGLFATVLVSFCGASYWGV) threads the bilayer. The Cytoplasmic segment spans residues 875-887 (VNSREDGVPLKAD). The helical transmembrane segment at 888–908 (FLAALLPLLCIPAFFSLFTGL) threads the bilayer. Over 909-921 (YKWKDDDWKISRG) the chain is Extracellular. The chain crosses the membrane as a helical span at residues 922–942 (VYLFVGMGMLLLFGAVAAVIV). The Cytoplasmic segment spans residues 943–946 (TIRP). The helical transmembrane segment at 947–967 (WTVGVACLVAILFLVFVIGVI) threads the bilayer. Residues 968-981 (HYWTSNNFYLTRTQ) lie on the Extracellular side of the membrane. The helical transmembrane segment at 982–1002 (MLLVCSIAFLLALAAFLMGLF) threads the bilayer. Residues 1003 to 1016 (HGKPFVGASIGYFS) are Cytoplasmic-facing. A helical membrane pass occupies residues 1017–1037 (FIFLLTGRALTVLLSPPIVVY). The Extracellular portion of the chain corresponds to 1038-1060 (SPRVLPVYVYDAHADSAKNVSYA). A helical transmembrane segment spans residues 1061-1081 (FLILYGIALATEVWGVIASLI). The Cytoplasmic segment spans residues 1082–2159 (MNPPFVGAGV…SKASIRLEAV (1078 aa)). Phosphoserine occurs at positions 1371 and 1376. The region spanning 1417-1609 (TGRHCGELDL…MSPAEYGFFD (193 aa)) is the Calpain catalytic 1 domain. Serine 1665 is modified (phosphoserine). Residues 1703 to 2005 (NFTDQEFPPE…FRSIYVCRVY (303 aa)) enclose the Calpain catalytic 2 domain. Catalysis depends on residues cysteine 1769, histidine 1927, and asparagine 1947.

The protein belongs to the peptidase C2 family. In terms of processing, autocatalytic proteolytic cleavage leading to the production of mainly cytoplasmic localized subproducts of about 85 and 120 kDa. In terms of tissue distribution, expressed in most tissues at low levels ranging from 30 to 55 ppm. Present in all endosperm cells at transcript level, but confined to aleurones at protein level.

The protein resides in the endoplasmic reticulum membrane. It localises to the cytoplasm. Its subcellular location is the cell membrane. The protein localises to the endosome membrane. Essential protease involved in epiderm development. Required for aleurone cell development in the endosperm probably by maintaining and restricting the aleurone and embryonic epidermal L1 cell-layer fates as well as meristems organization. Involved in the maintenance of adaxial/abaxial axis information in developing leaves, probably by regulating cell proliferation and expansion. Does not need calcium ions to be active. The sequence is that of Calpain-type cysteine protease DEK1 (DEK1) from Zea mays (Maize).